We begin with the raw amino-acid sequence, 277 residues long: Pantothenate synthetase (277 aa).

Met26 to His33 is an ATP binding site. Residue His33 is the Proton donor of the active site. A (R)-pantoate-binding site is contributed by Gln57. A beta-alanine-binding site is contributed by Gln57. Position 143–146 (Gly143–Asp146) interacts with ATP. A (R)-pantoate-binding site is contributed by Gln149. ATP is bound by residues Val172 and Leu180–Arg183.

Belongs to the pantothenate synthetase family. In terms of assembly, homodimer.

The protein resides in the cytoplasm. It catalyses the reaction (R)-pantoate + beta-alanine + ATP = (R)-pantothenate + AMP + diphosphate + H(+). It functions in the pathway cofactor biosynthesis; (R)-pantothenate biosynthesis; (R)-pantothenate from (R)-pantoate and beta-alanine: step 1/1. Functionally, catalyzes the condensation of pantoate with beta-alanine in an ATP-dependent reaction via a pantoyl-adenylate intermediate. This chain is Pantothenate synthetase, found in Chloroflexus aggregans (strain MD-66 / DSM 9485).